Consider the following 730-residue polypeptide: MFQRKRSVSFGGYGWIDKTMLASLKMKKQELLSSADVTLPERPLSPPLTAPPTMKSAEFFEMLEKMQAPKLEDQKAGSQKHKEDYIPYPSIDEILEKGSPYPLVILPQFGGYWIEDPENLGTPTSSDSSVCEEEEENFSPSPYGYKLECKGEARAYRKHFLGKDHLNFYCTASSLGNLILSIKCEEVDGTEYLRIILRSKVKTLHERIPLAGFSKLPSIPQIAKAFCDDASGLKFNPVLYPKASQMIVAYDEHEVNNTFKFGVIYQKFRQTQEEELFGNNEESAAFRNFLNLLGDTITLQDFKGFRGGLDVSHGQTGVESVYTVFRDREIMFHVSTKLPFTEGDTQQLQRKRHIGNDIVAIIFQEENTPFVPDMIASNFLHAYIVVQVENPDADTTSYKVSVTAREDVPSFGPPLPSPPVFQKSPEFREFLLTKLINAENACCKSDKFAKLEDRTRAALLDNLHDELHGHTQTMLGLGPEEDKLENGGHGGFLESFKRAIRVRSHSMETMVGSQRKQHGGGIPGSLSGGIAHNSGEVTKTTFSPPVSAATAKNQSRSPIKRRSGLFPRLHTGLESQVDSRARCDSISGPQKTPDVGHSSQEMKSETSSNPSSPEICPNKDRPFVKLKENGRSNISRSSSSTSSFSSTAGESETLEEYDSVGSQPSTASPFKQDVFIYSASPGSDSPSVGAAATPVIMSRSPTDIKNRNSPRSNLKFRFDKLSHGSSSTSH.

The 217-residue stretch at 247-463 (IVAYDEHEVN…RTRAALLDNL (217 aa)) folds into the Rap-GAP domain. Disordered regions lie at residues 510–668 (MVGS…STAS) and 698–730 (SRSP…STSH). 2 stretches are compositionally biased toward polar residues: residues 535–557 (GEVT…QSRS) and 597–612 (HSSQ…NPSS). Residues 617–630 (PNKDRPFVKLKENG) are compositionally biased toward basic and acidic residues. A compositionally biased stretch (low complexity) spans 631–651 (RSNISRSSSSTSSFSSTAGES). Residues 699–712 (RSPTDIKNRNSPRS) are compositionally biased toward polar residues.

Its subcellular location is the cytoplasm. Functionally, GTPase activator for the nuclear Ras-related regulatory protein RAP-1A (KREV-1), converting it to the putatively inactive GDP-bound state. The protein is Rap1 GTPase-activating protein 2 (RAP1GAP2) of Gallus gallus (Chicken).